The primary structure comprises 201 residues: dTTP/UTP pyrophosphatase (201 aa).

Asp-76 serves as the catalytic Proton acceptor.

The protein belongs to the Maf family. YhdE subfamily. A divalent metal cation is required as a cofactor.

It is found in the cytoplasm. It catalyses the reaction dTTP + H2O = dTMP + diphosphate + H(+). The enzyme catalyses UTP + H2O = UMP + diphosphate + H(+). Its function is as follows. Nucleoside triphosphate pyrophosphatase that hydrolyzes dTTP and UTP. May have a dual role in cell division arrest and in preventing the incorporation of modified nucleotides into cellular nucleic acids. This chain is dTTP/UTP pyrophosphatase, found in Neisseria meningitidis serogroup A / serotype 4A (strain DSM 15465 / Z2491).